We begin with the raw amino-acid sequence, 508 residues long: MSIRPDEISTVLKDKIANYESQVDVYEVGTVLYIGDGIARVHGLENVMANELVEFPGEIYGMALNLEEDNVGCVLLGEYSHIKEGDQVKRTGRIIEVPVGDDLVGRVVNPVGEPRDGKGPIEATDFRPVETRAPGVIDRKPVEEPLQTGLKAIDSMIPIGRGQRELIIGDRGTGKSAIGIDTILNQKDSDVYCIYVAIGQKKSTVAQVVDVLERHGAMDYTTVVAATADEPAPLLYLAPYAGCSMGEKFMHEGKHVLVVYDDLSKHAASYRELSLLLRRPPGREAYPGDIFYLHSRLLERAAKLNDENGGGSLTALPIIETQAGDVSAYIPTNVISITDGQIYLISDLFHAGQRPAVDVGISVSRVGGSAQLKGMKQVSGTLRLDLAQYRELEAFAQFGTDLDKSTQQKLARGKRTFEILKQDQYQPMPVADQIVIIFCATHGLLDDLEVEQIKEFEKFLLSYVKDNEPGIYQQVETGEKISDELEDQLKEVINKAKEQFKEEKELTG.

169–176 (GDRGTGKS) contacts ATP.

The protein belongs to the ATPase alpha/beta chains family. As to quaternary structure, F-type ATPases have 2 components, CF(1) - the catalytic core - and CF(0) - the membrane proton channel. CF(1) has five subunits: alpha(3), beta(3), gamma(1), delta(1), epsilon(1). CF(0) has three main subunits: a(1), b(2) and c(9-12). The alpha and beta chains form an alternating ring which encloses part of the gamma chain. CF(1) is attached to CF(0) by a central stalk formed by the gamma and epsilon chains, while a peripheral stalk is formed by the delta and b chains.

Its subcellular location is the cell membrane. The enzyme catalyses ATP + H2O + 4 H(+)(in) = ADP + phosphate + 5 H(+)(out). Functionally, produces ATP from ADP in the presence of a proton gradient across the membrane. The alpha chain is a regulatory subunit. This is ATP synthase subunit alpha from Natranaerobius thermophilus (strain ATCC BAA-1301 / DSM 18059 / JW/NM-WN-LF).